A 239-amino-acid chain; its full sequence is Fatty acid metabolism regulator protein (239 aa).

In terms of domain architecture, HTH gntR-type spans 6–74 (QSPAGFAEEY…HGKPTKINNF (69 aa)). Positions 34–53 (ERELSELIGVTRTTLREVLQ) form a DNA-binding region, H-T-H motif.

Homodimer.

The protein localises to the cytoplasm. Its function is as follows. Multifunctional regulator of fatty acid metabolism. This chain is Fatty acid metabolism regulator protein, found in Pectobacterium atrosepticum (strain SCRI 1043 / ATCC BAA-672) (Erwinia carotovora subsp. atroseptica).